Reading from the N-terminus, the 527-residue chain is Phosphoethanolamine transferase OpgE (527 aa).

At 1-33 (MNLTLKESLVTRSRVFSPWTAFYFLQSLLINLG) the chain is on the periplasmic side. The chain crosses the membrane as a helical span at residues 34-54 (LGYPFSLLYTAAFTAILLLLW). The Cytoplasmic portion of the chain corresponds to 55–62 (RTLPRVQK). A helical transmembrane segment spans residues 63 to 83 (VLVGVSSLVAACYFPFAQAYG). Residues 84-106 (APNFNTLLALHSTNMEESTEILT) are Periplasmic-facing. A helical membrane pass occupies residues 107–127 (IFPWYSYLVGLFIFALGVIAI). The Cytoplasmic portion of the chain corresponds to 128–146 (RRKKENEKARWNTFDSLCL). Residues 147–167 (VFSVATFFVAPVQNLAWGGVF) traverse the membrane as a helical segment. Residues 168–527 (KLKDTGYPVF…LGTDIFDPKP (360 aa)) lie on the Periplasmic side of the membrane.

This sequence belongs to the phosphoethanolamine transferase family.

It is found in the cell inner membrane. It functions in the pathway glycan metabolism; osmoregulated periplasmic glucan (OPG) biosynthesis. Functionally, catalyzes the addition of a phosphoethanolamine moiety to the osmoregulated periplasmic glucan (OPG) backbone. The chain is Phosphoethanolamine transferase OpgE (opgE) from Escherichia coli (strain K12).